Reading from the N-terminus, the 84-residue chain is Putative defensin-like protein 38 (84 aa).

The signal sequence occupies residues 1-26 (MASSKNGTVLFVSLMILLLISTGVKA). 4 disulfide bridges follow: C28–C84, C41–C65, C50–C76, and C54–C78.

It belongs to the DEFL family.

Its subcellular location is the secreted. This is Putative defensin-like protein 38 from Arabidopsis thaliana (Mouse-ear cress).